Reading from the N-terminus, the 545-residue chain is Sulfite oxidase, mitochondrial (545 aa).

A mitochondrion-targeting transit peptide spans 1–79; it reads MLLLHRAVVL…YQDHRCRAAQ (79 aa). The Cytochrome b5 heme-binding domain occupies 82–161; sequence THIYTKEEVS…LAQYKIGELN (80 aa). Histidine 118 is a binding site for heme b. Serine 123 carries the post-translational modification Phosphoserine. 3 residues coordinate heme b: histidine 143, glutamine 145, and histidine 147. Positions 165 to 174 are hinge; sequence KVAPTVETSD. The moco domain stretch occupies residues 175-401; sequence PYADDPVRHP…YSHWQRRDYK (227 aa). Mo-molybdopterin-binding positions include 215-219, cysteine 264, aspartate 322, histidine 361, arginine 366, and 377-379; these read FTRNH and HVK. Residues 402–538 form a homodimerization region; that stretch reads GFSPSVDWET…RGVLSNAWHR (137 aa).

In terms of assembly, homodimer. Heme b serves as cofactor. Mo-molybdopterin is required as a cofactor.

The protein resides in the mitochondrion intermembrane space. The enzyme catalyses sulfite + O2 + H2O = sulfate + H2O2. The protein operates within energy metabolism; sulfur metabolism. In terms of biological role, catalyzes the oxidation of sulfite to sulfate, the terminal reaction in the oxidative degradation of sulfur-containing amino acids. In Homo sapiens (Human), this protein is Sulfite oxidase, mitochondrial (SUOX).